Reading from the N-terminus, the 672-residue chain is Probable copper-transporting P-type ATPase B (672 aa).

A compositionally biased stretch (basic and acidic residues) spans 1-17; that stretch reads MEHHSHQEHENHTSHGN. The segment at 1–22 is disordered; sequence MEHHSHQEHENHTSHGNHEHHH. Helical transmembrane passes span 30–50, 55–75, 93–113, 125–145, 282–302, and 313–333; these read FFIS…MGVK, ISFT…FFYG, GMMT…LYAF, TMDF…GHWI, GYLF…WMLI, and LVTV…PLVT. The 4-aspartylphosphate intermediate role is filled by aspartate 365. Mg(2+) is bound by residues aspartate 563 and aspartate 567. The next 2 membrane-spanning stretches (helical) occupy residues 621 to 643 and 647 to 669; these read LWWG…ASIG and SPAV…AFTL.

It belongs to the cation transport ATPase (P-type) (TC 3.A.3) family. Type IB subfamily.

It is found in the cell membrane. The enzyme catalyses Cu(+)(in) + ATP + H2O = Cu(+)(out) + ADP + phosphate + H(+). Involved in copper transport. In Staphylococcus aureus, this protein is Probable copper-transporting P-type ATPase B (copB).